Reading from the N-terminus, the 377-residue chain is Histidinol-phosphate aminotransferase (377 aa).

K232 carries the post-translational modification N6-(pyridoxal phosphate)lysine.

It belongs to the class-II pyridoxal-phosphate-dependent aminotransferase family. Histidinol-phosphate aminotransferase subfamily. In terms of assembly, homodimer. Pyridoxal 5'-phosphate serves as cofactor.

The catalysed reaction is L-histidinol phosphate + 2-oxoglutarate = 3-(imidazol-4-yl)-2-oxopropyl phosphate + L-glutamate. It participates in amino-acid biosynthesis; L-histidine biosynthesis; L-histidine from 5-phospho-alpha-D-ribose 1-diphosphate: step 7/9. The chain is Histidinol-phosphate aminotransferase from Mycobacterium sp. (strain KMS).